We begin with the raw amino-acid sequence, 334 residues long: Holliday junction branch migration complex subunit RuvB (334 aa).

The segment at methionine 1–threonine 181 is large ATPase domain (RuvB-L). ADP contacts are provided by leucine 19 and arginine 20. 3 residues coordinate ATP: glutamate 26, phenylalanine 27, and isoleucine 28. ADP-binding residues include phenylalanine 27, isoleucine 28, glycine 61, leucine 62, glycine 63, lysine 64, threonine 65, and threonine 66. ATP contacts are provided by leucine 62 and glycine 63. ATP-binding positions include glutamate 127–phenylalanine 129 and arginine 170. The ADP site is built by tyrosine 180, proline 216, and arginine 217. Residues valine 182 to glutamate 255 are small ATPAse domain (RuvB-S). Position 216 (proline 216) interacts with ATP. A head domain (RuvB-H) region spans residues glycine 256–phenylalanine 334. Positions 309 and 314 each coordinate DNA.

Belongs to the RuvB family. As to quaternary structure, homohexamer. Forms an RuvA(8)-RuvB(12)-Holliday junction (HJ) complex. HJ DNA is sandwiched between 2 RuvA tetramers; dsDNA enters through RuvA and exits via RuvB. An RuvB hexamer assembles on each DNA strand where it exits the tetramer. Each RuvB hexamer is contacted by two RuvA subunits (via domain III) on 2 adjacent RuvB subunits; this complex drives branch migration. In the full resolvosome a probable DNA-RuvA(4)-RuvB(12)-RuvC(2) complex forms which resolves the HJ.

It is found in the cytoplasm. It catalyses the reaction ATP + H2O = ADP + phosphate + H(+). The RuvA-RuvB-RuvC complex processes Holliday junction (HJ) DNA during genetic recombination and DNA repair, while the RuvA-RuvB complex plays an important role in the rescue of blocked DNA replication forks via replication fork reversal (RFR). RuvA specifically binds to HJ cruciform DNA, conferring on it an open structure. The RuvB hexamer acts as an ATP-dependent pump, pulling dsDNA into and through the RuvAB complex. RuvB forms 2 homohexamers on either side of HJ DNA bound by 1 or 2 RuvA tetramers; 4 subunits per hexamer contact DNA at a time. Coordinated motions by a converter formed by DNA-disengaged RuvB subunits stimulates ATP hydrolysis and nucleotide exchange. Immobilization of the converter enables RuvB to convert the ATP-contained energy into a lever motion, pulling 2 nucleotides of DNA out of the RuvA tetramer per ATP hydrolyzed, thus driving DNA branch migration. The RuvB motors rotate together with the DNA substrate, which together with the progressing nucleotide cycle form the mechanistic basis for DNA recombination by continuous HJ branch migration. Branch migration allows RuvC to scan DNA until it finds its consensus sequence, where it cleaves and resolves cruciform DNA. In terms of biological role, promotes Holliday junction (HJ) branch migration in conjunction with RuvA. Subunits can be free, ADP- or ATP-bound; nucleotide binding changes during the reaction cycle. Has a DNA-dependent ATPase activity; dsDNA and supercoiled DNA but not ssDNA stimulate activity. This Thermotoga maritima (strain ATCC 43589 / DSM 3109 / JCM 10099 / NBRC 100826 / MSB8) protein is Holliday junction branch migration complex subunit RuvB.